The following is a 306-amino-acid chain: Ribosomal protein L11 methyltransferase (306 aa).

S-adenosyl-L-methionine-binding residues include Thr154, Gly179, Asp201, and Asn242.

This sequence belongs to the methyltransferase superfamily. PrmA family.

Its subcellular location is the cytoplasm. The enzyme catalyses L-lysyl-[protein] + 3 S-adenosyl-L-methionine = N(6),N(6),N(6)-trimethyl-L-lysyl-[protein] + 3 S-adenosyl-L-homocysteine + 3 H(+). Its function is as follows. Methylates ribosomal protein L11. The polypeptide is Ribosomal protein L11 methyltransferase (Xanthomonas campestris pv. campestris (strain 8004)).